A 502-amino-acid chain; its full sequence is Activin receptor type-1-like (502 aa).

A signal peptide spans 1-22 (MTLGSFRRGLLMLSVAFGLTRG). The Extracellular portion of the chain corresponds to 23 to 119 (DLAKPSKLVN…EEPEVDAHLP (97 aa)). Residue asparagine 32 is glycosylated (N-linked (GlcNAc...) asparagine). 3 disulfide bridges follow: cysteine 33–cysteine 50, cysteine 35–cysteine 40, and cysteine 45–cysteine 68. The tract at residues 72-75 (NQEL) is mediates specificity for BMP ligand. 2 disulfide bridges follow: cysteine 76–cysteine 88 and cysteine 89–cysteine 94. The N-linked (GlcNAc...) asparagine glycan is linked to asparagine 97. A helical transmembrane segment spans residues 120–140 (LILGPVLALPVLVALGALGLW). Residues 141-502 (RVRRRQEKQR…HNPEKPKVIH (362 aa)) lie on the Cytoplasmic side of the membrane. Serine 154, serine 159, and serine 160 each carry phosphoserine. Positions 171–200 (SMLGDFLDSDCTTGSGSGLPFLVQRTVARQ) constitute a GS domain. One can recognise a Protein kinase domain in the interval 201–502 (VALVECVGKG…HNPEKPKVIH (302 aa)). Residues 207-215 (VGKGRYGEV) and lysine 228 contribute to the ATP site. The Proton acceptor role is filled by aspartate 329.

Belongs to the protein kinase superfamily. TKL Ser/Thr protein kinase family. TGFB receptor subfamily. Interacts with TSC22D1/TSC-22. The cofactor is Mg(2+). It depends on Mn(2+) as a cofactor.

The protein localises to the cell membrane. It carries out the reaction L-threonyl-[receptor-protein] + ATP = O-phospho-L-threonyl-[receptor-protein] + ADP + H(+). It catalyses the reaction L-seryl-[receptor-protein] + ATP = O-phospho-L-seryl-[receptor-protein] + ADP + H(+). Functionally, type I receptor for TGF-beta family ligands BMP9/GDF2 and BMP10 and important regulator of normal blood vessel development. On ligand binding, forms a receptor complex consisting of two type II and two type I transmembrane serine/threonine kinases. Type II receptors phosphorylate and activate type I receptors which autophosphorylate, then bind and activate SMAD transcriptional regulators. May bind activin as well. The polypeptide is Activin receptor type-1-like (Acvrl1) (Mus musculus (Mouse)).